The following is a 249-amino-acid chain: Probable transcriptional regulatory protein CYB_1350 (249 aa).

The protein belongs to the TACO1 family.

It localises to the cytoplasm. The protein is Probable transcriptional regulatory protein CYB_1350 of Synechococcus sp. (strain JA-2-3B'a(2-13)) (Cyanobacteria bacterium Yellowstone B-Prime).